The following is a 303-amino-acid chain: Biphenyl-2,3-diol 1,2-dioxygenase (303 aa).

VOC domains follow at residues S5–G119 and G143–S264. Fe cation contacts are provided by H146, H210, and E260. The tract at residues W283–E303 is disordered. The segment covering S287–E303 has biased composition (basic and acidic residues).

It belongs to the extradiol ring-cleavage dioxygenase family. In terms of assembly, homooctamer. The cofactor is Fe(2+).

It carries out the reaction biphenyl-2,3-diol + O2 = 2-hydroxy-6-oxo-6-phenylhexa-2,4-dienoate + H(+). It functions in the pathway xenobiotic degradation; biphenyl degradation; 2-hydroxy-2,4-pentadienoate and benzoate from biphenyl: step 3/4. The sequence is that of Biphenyl-2,3-diol 1,2-dioxygenase (bphC) from Metapseudomonas furukawaii (Pseudomonas furukawaii).